A 128-amino-acid polypeptide reads, in one-letter code: MNSATSETTTNTGAAETTTSTGAAETKTVVTSSISRFNHAETQTASATDVIGHSSSVVSVSETGNTKSLITSGLSTMSQQPRSTPASSIIGSSTASLEISTYVGIANGLLTNNGISVFISTVLLAIVW.

The segment at 1-26 (MNSATSETTTNTGAAETTTSTGAAET) is disordered. A helical transmembrane segment spans residues 105 to 127 (IANGLLTNNGISVFISTVLLAIV).

It belongs to the flocculin family.

The protein resides in the membrane. This is an uncharacterized protein from Saccharomyces cerevisiae (strain ATCC 204508 / S288c) (Baker's yeast).